The sequence spans 207 residues: UPF0319 protein VV1_2115 (207 aa).

The N-terminal stretch at 1-18 (MLRVLGLAGMLMSFNIHA) is a signal peptide.

Belongs to the UPF0319 family.

The polypeptide is UPF0319 protein VV1_2115 (Vibrio vulnificus (strain CMCP6)).